The primary structure comprises 466 residues: Probable Xaa-Pro aminopeptidase pepP (466 aa).

Asp264, Asp275, Glu398, and Glu438 together coordinate Mn(2+).

It belongs to the peptidase M24B family. The cofactor is Mn(2+).

The enzyme catalyses Release of any N-terminal amino acid, including proline, that is linked to proline, even from a dipeptide or tripeptide.. Its function is as follows. Catalyzes the removal of a penultimate prolyl residue from the N-termini of peptides. The protein is Probable Xaa-Pro aminopeptidase pepP (pepP) of Aspergillus clavatus (strain ATCC 1007 / CBS 513.65 / DSM 816 / NCTC 3887 / NRRL 1 / QM 1276 / 107).